We begin with the raw amino-acid sequence, 352 residues long: N-acetyl-gamma-glutamyl-phosphate reductase (352 aa).

It belongs to the NAGSA dehydrogenase family. Type 1 subfamily.

The protein localises to the cytoplasm. The catalysed reaction is N-acetyl-L-glutamate 5-semialdehyde + phosphate + NADP(+) = N-acetyl-L-glutamyl 5-phosphate + NADPH + H(+). It functions in the pathway amino-acid biosynthesis; L-arginine biosynthesis; N(2)-acetyl-L-ornithine from L-glutamate: step 3/4. In terms of biological role, catalyzes the NADPH-dependent reduction of N-acetyl-5-glutamyl phosphate to yield N-acetyl-L-glutamate 5-semialdehyde. In Nostoc ellipsosporum, this protein is N-acetyl-gamma-glutamyl-phosphate reductase.